We begin with the raw amino-acid sequence, 215 residues long: Charged multivesicular body protein 4 (215 aa).

A coiled-coil region spans residues 10-173 (KQDTQETIGK…QEELDAQLLN (164 aa)).

Belongs to the SNF7 family. As to quaternary structure, probable core component of the endosomal sorting required for transport complex III (ESCRT-III). ESCRT-III components are thought to multimerize to form a flat lattice on the perimeter membrane of the endosome.

The protein localises to the cytoplasmic vesicle membrane. Its subcellular location is the late endosome membrane. In terms of biological role, probable core component of the endosomal sorting required for transport complex III (ESCRT-III) which is involved in multivesicular bodies (MVBs) formation and sorting of endosomal cargo proteins into MVBs. MVBs contain intraluminal vesicles (ILVs) that are generated by invagination and scission from the limiting membrane of the endosome and mostly are delivered to lysosomes enabling degradation of membrane proteins. This chain is Charged multivesicular body protein 4 (chmp4), found in Dictyostelium discoideum (Social amoeba).